Consider the following 246-residue polypeptide: Pyridoxine 5'-phosphate synthase (246 aa).

Asn12 is a 3-amino-2-oxopropyl phosphate binding site. Residue 14–15 (DH) coordinates 1-deoxy-D-xylulose 5-phosphate. Arg23 is a binding site for 3-amino-2-oxopropyl phosphate. The active-site Proton acceptor is His48. 2 residues coordinate 1-deoxy-D-xylulose 5-phosphate: Arg50 and His55. The Proton acceptor role is filled by Glu75. 1-deoxy-D-xylulose 5-phosphate is bound at residue Thr105. His196 acts as the Proton donor in catalysis. Residues Gly197 and 218 to 219 (GH) each bind 3-amino-2-oxopropyl phosphate.

It belongs to the PNP synthase family. Homooctamer; tetramer of dimers.

The protein localises to the cytoplasm. It catalyses the reaction 3-amino-2-oxopropyl phosphate + 1-deoxy-D-xylulose 5-phosphate = pyridoxine 5'-phosphate + phosphate + 2 H2O + H(+). The protein operates within cofactor biosynthesis; pyridoxine 5'-phosphate biosynthesis; pyridoxine 5'-phosphate from D-erythrose 4-phosphate: step 5/5. Functionally, catalyzes the complicated ring closure reaction between the two acyclic compounds 1-deoxy-D-xylulose-5-phosphate (DXP) and 3-amino-2-oxopropyl phosphate (1-amino-acetone-3-phosphate or AAP) to form pyridoxine 5'-phosphate (PNP) and inorganic phosphate. The polypeptide is Pyridoxine 5'-phosphate synthase (Pseudomonas syringae pv. tomato (strain ATCC BAA-871 / DC3000)).